Reading from the N-terminus, the 117-residue chain is Holo-[acyl-carrier-protein] synthase (117 aa).

Residues Asp8 and Glu58 each coordinate Mg(2+).

Belongs to the P-Pant transferase superfamily. AcpS family. Mg(2+) serves as cofactor.

Its subcellular location is the cytoplasm. The enzyme catalyses apo-[ACP] + CoA = holo-[ACP] + adenosine 3',5'-bisphosphate + H(+). Its function is as follows. Transfers the 4'-phosphopantetheine moiety from coenzyme A to a Ser of acyl-carrier-protein. The polypeptide is Holo-[acyl-carrier-protein] synthase (Staphylococcus epidermidis (strain ATCC 35984 / DSM 28319 / BCRC 17069 / CCUG 31568 / BM 3577 / RP62A)).